Reading from the N-terminus, the 187-residue chain is UPF0301 protein WIGBR1650 (187 aa).

Belongs to the UPF0301 (AlgH) family.

The polypeptide is UPF0301 protein WIGBR1650 (Wigglesworthia glossinidia brevipalpis).